Reading from the N-terminus, the 208-residue chain is Probable Brix domain-containing ribosomal biogenesis protein (208 aa).

A Brix domain is found at 1-196; it reads MMLITTSHRP…IWIMEDGRRW (196 aa).

Functionally, probably involved in the biogenesis of the ribosome. The chain is Probable Brix domain-containing ribosomal biogenesis protein from Thermococcus kodakarensis (strain ATCC BAA-918 / JCM 12380 / KOD1) (Pyrococcus kodakaraensis (strain KOD1)).